The sequence spans 301 residues: Bifunctional protein FolD (301 aa).

NADP(+)-binding positions include 166–168, Ser191, and Ile232; that span reads GKS.

This sequence belongs to the tetrahydrofolate dehydrogenase/cyclohydrolase family. In terms of assembly, homodimer.

It carries out the reaction (6R)-5,10-methylene-5,6,7,8-tetrahydrofolate + NADP(+) = (6R)-5,10-methenyltetrahydrofolate + NADPH. The catalysed reaction is (6R)-5,10-methenyltetrahydrofolate + H2O = (6R)-10-formyltetrahydrofolate + H(+). Its pathway is one-carbon metabolism; tetrahydrofolate interconversion. In terms of biological role, catalyzes the oxidation of 5,10-methylenetetrahydrofolate to 5,10-methenyltetrahydrofolate and then the hydrolysis of 5,10-methenyltetrahydrofolate to 10-formyltetrahydrofolate. The polypeptide is Bifunctional protein FolD (Orientia tsutsugamushi (strain Boryong) (Rickettsia tsutsugamushi)).